The sequence spans 105 residues: Met repressor (105 aa).

It belongs to the MetJ family. As to quaternary structure, homodimer.

It localises to the cytoplasm. In terms of biological role, this regulatory protein, when combined with SAM (S-adenosylmethionine) represses the expression of the methionine regulon and of enzymes involved in SAM synthesis. This chain is Met repressor, found in Sodalis glossinidius (strain morsitans).